The sequence spans 352 residues: Phosphoribosylformylglycinamidine cyclo-ligase (352 aa).

It belongs to the AIR synthase family.

The protein resides in the cytoplasm. It catalyses the reaction 2-formamido-N(1)-(5-O-phospho-beta-D-ribosyl)acetamidine + ATP = 5-amino-1-(5-phospho-beta-D-ribosyl)imidazole + ADP + phosphate + H(+). Its pathway is purine metabolism; IMP biosynthesis via de novo pathway; 5-amino-1-(5-phospho-D-ribosyl)imidazole from N(2)-formyl-N(1)-(5-phospho-D-ribosyl)glycinamide: step 2/2. The polypeptide is Phosphoribosylformylglycinamidine cyclo-ligase (Pseudomonas savastanoi pv. phaseolicola (strain 1448A / Race 6) (Pseudomonas syringae pv. phaseolicola (strain 1448A / Race 6))).